Reading from the N-terminus, the 136-residue chain is uncharacterized protein (136 aa).

The interval 1–33 (MRDHLPPGLPPDPFADDPCDPSAALEAVEPGQP) is disordered.

This sequence to M.leprae ML0386.

This is an uncharacterized protein from Mycobacterium tuberculosis (strain CDC 1551 / Oshkosh).